Reading from the N-terminus, the 33-residue chain is Neutrophil defensin 4 (33 aa).

Intrachain disulfides connect C3/C31, C5/C20, and C10/C30.

The protein belongs to the alpha-defensin family. Post-translationally, HANP-2 could be a product of proteolytic N-terminal amino acid removal from HANP-4.

It is found in the secreted. Functionally, bactericidal activity, greater against Gram-positive bacteria. Low anti-fungi activity. In Mesocricetus auratus (Golden hamster), this protein is Neutrophil defensin 4.